The sequence spans 432 residues: Glutamyl-tRNA reductase (432 aa).

Residues 49 to 52, Ser-109, 114 to 116, and Gln-120 contribute to the substrate site; these read TCNR and EGQ. The active-site Nucleophile is Cys-50. 198-203 lines the NADP(+) pocket; it reads GAGRMS.

This sequence belongs to the glutamyl-tRNA reductase family. In terms of assembly, homodimer.

It catalyses the reaction (S)-4-amino-5-oxopentanoate + tRNA(Glu) + NADP(+) = L-glutamyl-tRNA(Glu) + NADPH + H(+). It participates in porphyrin-containing compound metabolism; protoporphyrin-IX biosynthesis; 5-aminolevulinate from L-glutamyl-tRNA(Glu): step 1/2. The protein operates within porphyrin-containing compound metabolism; chlorophyll biosynthesis. Functionally, catalyzes the NADPH-dependent reduction of glutamyl-tRNA(Glu) to glutamate 1-semialdehyde (GSA). This Synechococcus sp. (strain CC9902) protein is Glutamyl-tRNA reductase.